Consider the following 203-residue polypeptide: Guanylate kinase (203 aa).

The region spanning 3–181 is the Guanylate kinase-like domain; that stretch reads GTLYIVAAPS…AVSEMCAIFT (179 aa). Residue 10-17 participates in ATP binding; sequence APSGAGKS.

Belongs to the guanylate kinase family.

The protein resides in the cytoplasm. The enzyme catalyses GMP + ATP = GDP + ADP. Essential for recycling GMP and indirectly, cGMP. In Xanthomonas campestris pv. campestris (strain 8004), this protein is Guanylate kinase.